Reading from the N-terminus, the 362-residue chain is Cobalt-precorrin-5B C(1)-methyltransferase (362 aa).

This sequence belongs to the CbiD family.

The enzyme catalyses Co-precorrin-5B + S-adenosyl-L-methionine = Co-precorrin-6A + S-adenosyl-L-homocysteine. It participates in cofactor biosynthesis; adenosylcobalamin biosynthesis; cob(II)yrinate a,c-diamide from sirohydrochlorin (anaerobic route): step 6/10. Catalyzes the methylation of C-1 in cobalt-precorrin-5B to form cobalt-precorrin-6A. The chain is Cobalt-precorrin-5B C(1)-methyltransferase from Desulfotalea psychrophila (strain LSv54 / DSM 12343).